Consider the following 876-residue polypeptide: E3 ubiquitin-protein ligase TRIM71 (876 aa).

Residues cysteine 12–aspartate 90 form an RING-type zinc finger. The segment covering serine 26–glycine 40 has biased composition (low complexity). 2 disordered regions span residues serine 26–glycine 46 and lysine 128–leucine 192. The segment covering proline 137–alanine 148 has biased composition (gly residues). Residues arginine 160–serine 182 are compositionally biased toward low complexity. The B box-type 1; atypical zinc-finger motif lies at glutamine 200 to phenylalanine 247. The Zn(2+) site is built by cysteine 205, cysteine 208, cysteine 229, histidine 233, cysteine 286, histidine 289, cysteine 309, and histidine 314. A B box-type 2 zinc finger spans residues glutamate 281–leucine 322. Coiled-coil stretches lie at residues arginine 344 to lysine 373 and glutamine 399 to arginine 434. A Filamin repeat occupies serine 487–valine 588. NHL repeat units lie at residues glycine 601 to cysteine 644, histidine 648 to glutamate 691, isoleucine 695 to aspartate 738, leucine 742 to aspartate 785, alanine 789 to asparagine 832, and leucine 836 to phenylalanine 876.

This sequence belongs to the TRIM/RBCC family.

It is found in the cytoplasm. The protein localises to the P-body. The enzyme catalyses S-ubiquitinyl-[E2 ubiquitin-conjugating enzyme]-L-cysteine + [acceptor protein]-L-lysine = [E2 ubiquitin-conjugating enzyme]-L-cysteine + N(6)-ubiquitinyl-[acceptor protein]-L-lysine.. It functions in the pathway protein modification; protein ubiquitination. E3 ubiquitin-protein ligase that cooperates with the microRNAs (miRNAs) machinery and promotes embryonic stem cells proliferation and maintenance. Binds to miRNAs and participates in post-transcriptional repression of transcripts. Required to maintain proliferation and prevent premature differentiation of neural progenitor cells during early neural development. The sequence is that of E3 ubiquitin-protein ligase TRIM71 (TRIM71) from Gallus gallus (Chicken).